A 291-amino-acid polypeptide reads, in one-letter code: Quinol oxidase subunit 2 (291 aa).

An N-terminal signal peptide occupies residues 1–28 (MQLKKAFWKLASLLPLSLLLFLGGCDKK). The next 2 membrane-spanning stretches (helical) occupy residues 49 to 69 (SFLL…VILI) and 91 to 111 (LEII…IPTV).

The protein belongs to the cytochrome c oxidase subunit 2 family.

It localises to the cell membrane. The enzyme catalyses 2 a quinol + O2 = 2 a quinone + 2 H2O. In terms of biological role, catalyzes quinol oxidation with the concomitant reduction of oxygen to water. Subunit II transfers the electrons from a quinol to the binuclear center of the catalytic subunit I. The polypeptide is Quinol oxidase subunit 2 (Bacillus cereus (strain ATCC 14579 / DSM 31 / CCUG 7414 / JCM 2152 / NBRC 15305 / NCIMB 9373 / NCTC 2599 / NRRL B-3711)).